The chain runs to 92 residues: Acyl-CoA-binding protein (92 aa).

Positions 3 to 88 (LKEDFEEHAE…VKQLLEAEAS (86 aa)) constitute an ACB domain. An acyl-CoA-binding positions include 30–34 (YGLYK), Lys-56, and Tyr-75.

This sequence belongs to the ACBP family.

Its function is as follows. Binds medium- and long-chain acyl-CoA esters with very high affinity and may function as an intracellular carrier of acyl-CoA esters. This Brassica napus (Rape) protein is Acyl-CoA-binding protein.